Here is a 155-residue protein sequence, read N- to C-terminus: 6,7-dimethyl-8-ribityllumazine synthase (155 aa).

5-amino-6-(D-ribitylamino)uracil is bound by residues Phe-24, 58–60 (AFE), and 82–84 (VII). 87–88 (ST) contacts (2S)-2-hydroxy-3-oxobutyl phosphate. His-90 acts as the Proton donor in catalysis. Phe-115 provides a ligand contact to 5-amino-6-(D-ribitylamino)uracil. Arg-129 serves as a coordination point for (2S)-2-hydroxy-3-oxobutyl phosphate.

It belongs to the DMRL synthase family.

The enzyme catalyses (2S)-2-hydroxy-3-oxobutyl phosphate + 5-amino-6-(D-ribitylamino)uracil = 6,7-dimethyl-8-(1-D-ribityl)lumazine + phosphate + 2 H2O + H(+). The protein operates within cofactor biosynthesis; riboflavin biosynthesis; riboflavin from 2-hydroxy-3-oxobutyl phosphate and 5-amino-6-(D-ribitylamino)uracil: step 1/2. Its function is as follows. Catalyzes the formation of 6,7-dimethyl-8-ribityllumazine by condensation of 5-amino-6-(D-ribitylamino)uracil with 3,4-dihydroxy-2-butanone 4-phosphate. This is the penultimate step in the biosynthesis of riboflavin. In Chlorobium chlorochromatii (strain CaD3), this protein is 6,7-dimethyl-8-ribityllumazine synthase.